The following is a 213-amino-acid chain: MTSKPTCLIVASAASAGVSARSFQQCFNLCNPVFNLQTATPGGKSIDFTGVDDSTGRWVQEFSIKPYANPAKLESIDGARYQALLIPDCPGAMNDLAHSGSLARILSHFISQQKPVCAVGQGVAALCCATEDQKWIFSRYSMTGPSVFELVRSSEFANLPLIVEDFIKDNGGSYTASIEDAVHVVLDRHLITGQNIQSTTAAVNNLILLCNNR.

Residues 1 to 20 (MTSKPTCLIVASAASAGVSA) form the signal peptide.

This sequence belongs to the peptidase C56 family. In terms of assembly, homotetramer. Component of the FERRY complex.

The protein localises to the secreted. The protein resides in the early endosome. In terms of biological role, component of the FERRY complex (Five-subunit Endosomal Rab5 and RNA/ribosome intermediary). The FERRY complex directly interacts with mRNAs and RAB5A, and functions as a RAB5A effector involved in the localization and the distribution of specific mRNAs most likely by mediating their endosomal transport. The complex recruits mRNAs and ribosomes to early endosomes through direct mRNA-interaction. In Danio rerio (Zebrafish), this protein is Glutamine amidotransferase-like class 1 domain-containing protein 1.